Reading from the N-terminus, the 127-residue chain is Major sperm protein 2 (127 aa).

Ala-2 carries the N-acetylalanine modification. Positions Asp-9–Asn-126 constitute an MSP domain.

As to expression, sperm.

Its subcellular location is the cell projection. The protein resides in the pseudopodium. The protein localises to the cytoplasm. It localises to the cytoskeleton. Its function is as follows. Central component in molecular interactions underlying sperm crawling. Forms an extensive filament system that extends from sperm villipoda, along the leading edge of the pseudopod. This is Major sperm protein 2 from Onchocerca volvulus.